The primary structure comprises 313 residues: tRNA dimethylallyltransferase (313 aa).

11 to 18 serves as a coordination point for ATP; sequence GPTACGKT. 13 to 18 is a binding site for substrate; it reads TACGKT. Interaction with substrate tRNA regions lie at residues 36 to 39, 160 to 164, and 243 to 248; these read DSAL, QRIGR, and RCVGYR.

The protein belongs to the IPP transferase family. Monomer. Mg(2+) serves as cofactor.

The enzyme catalyses adenosine(37) in tRNA + dimethylallyl diphosphate = N(6)-dimethylallyladenosine(37) in tRNA + diphosphate. Its function is as follows. Catalyzes the transfer of a dimethylallyl group onto the adenine at position 37 in tRNAs that read codons beginning with uridine, leading to the formation of N6-(dimethylallyl)adenosine (i(6)A). The protein is tRNA dimethylallyltransferase of Neisseria gonorrhoeae (strain ATCC 700825 / FA 1090).